Consider the following 379-residue polypeptide: UDP-4-amino-4-deoxy-L-arabinose--oxoglutarate aminotransferase (379 aa).

Lys182 carries the post-translational modification N6-(pyridoxal phosphate)lysine.

Belongs to the DegT/DnrJ/EryC1 family. ArnB subfamily. In terms of assembly, homodimer. The cofactor is pyridoxal 5'-phosphate.

It carries out the reaction UDP-4-amino-4-deoxy-beta-L-arabinose + 2-oxoglutarate = UDP-beta-L-threo-pentopyranos-4-ulose + L-glutamate. It participates in nucleotide-sugar biosynthesis; UDP-4-deoxy-4-formamido-beta-L-arabinose biosynthesis; UDP-4-deoxy-4-formamido-beta-L-arabinose from UDP-alpha-D-glucuronate: step 2/3. It functions in the pathway bacterial outer membrane biogenesis; lipopolysaccharide biosynthesis. In terms of biological role, catalyzes the conversion of UDP-4-keto-arabinose (UDP-Ara4O) to UDP-4-amino-4-deoxy-L-arabinose (UDP-L-Ara4N). The modified arabinose is attached to lipid A and is required for resistance to polymyxin and cationic antimicrobial peptides. In Salmonella heidelberg (strain SL476), this protein is UDP-4-amino-4-deoxy-L-arabinose--oxoglutarate aminotransferase.